Consider the following 319-residue polypeptide: UPF0761 membrane protein PBPRA3489 (319 aa).

The next 6 membrane-spanning stretches (helical) occupy residues 50-70, 107-127, 143-163, 188-208, 215-235, and 249-269; these read LVPMITVVLAALSAFPVFAGL, VGIGALFVVAMMLMSSIDHAL, FSIYWMVLTLGPILVGSSIAV, ALPVIMSSSAFLGLYLLVPNL, ALLGALVASSLFELSKKGFAL, and ALAVIPILFVWVYLCWCIVLL.

It belongs to the UPF0761 family.

It is found in the cell inner membrane. The protein is UPF0761 membrane protein PBPRA3489 of Photobacterium profundum (strain SS9).